Reading from the N-terminus, the 712-residue chain is Glucans biosynthesis glucosyltransferase H (712 aa).

6 consecutive transmembrane segments (helical) span residues 57–77 (LAIM…MYQV), 89–109 (IVLA…VSAL), 408–428 (GIGS…GILI), 462–482 (FAGT…LVVI), 552–572 (YAAP…VSWP), and 573–593 (LLLW…VALL).

Belongs to the glycosyltransferase 2 family. OpgH subfamily.

The protein localises to the cell inner membrane. Its pathway is glycan metabolism; osmoregulated periplasmic glucan (OPG) biosynthesis. Involved in the biosynthesis of osmoregulated periplasmic glucans (OPGs). In Rhodopseudomonas palustris (strain BisA53), this protein is Glucans biosynthesis glucosyltransferase H.